A 551-amino-acid chain; its full sequence is (6-4)DNA photolyase (551 aa).

Residues 13 to 157 (AAAMVWFRKG…DVFSPVSHTL (145 aa)) form the Photolyase/cryptochrome alpha/beta domain. Glutamate 254 contacts phosphate. Residues lysine 255, 268-272 (TTVLS), 309-313 (QLLWR), 372-375 (WMHH), arginine 378, 407-409 (DSD), and asparagine 413 contribute to the FAD site. A DNA-binding site is contributed by tryptophan 312. The interaction with DNA stretch occupies residues 374 to 379 (HHLARH). Residue tryptophan 419 coordinates DNA. Positions 508-551 (YASNRLDDDKPDKGKSSNSSRRKLSAGSQVTPNSSKTKQLKRSS) are disordered. A compositionally biased stretch (basic and acidic residues) spans 512 to 522 (RLDDDKPDKGK). The span at 533-544 (AGSQVTPNSSKT) shows a compositional bias: polar residues.

This sequence belongs to the DNA photolyase class-1 family. FAD serves as cofactor.

It carries out the reaction (6-4) photoproduct (in DNA) = 2 pyrimidine residues (in DNA).. In terms of biological role, involved in repair of UV radiation-induced DNA damage. Catalyzes the photoreactivation of pyrimidine [6-4] pyrimidone photoproduct (6-4 products). This Oryza sativa subsp. japonica (Rice) protein is (6-4)DNA photolyase (UVR3).